Consider the following 169-residue polypeptide: Ribosome maturation factor RimM (169 aa).

The PRC barrel domain maps to 97 to 169 (EDEVYFKDLI…KIVVDWEYDY (73 aa)).

Belongs to the RimM family. As to quaternary structure, binds ribosomal protein uS19.

The protein localises to the cytoplasm. Functionally, an accessory protein needed during the final step in the assembly of 30S ribosomal subunit, possibly for assembly of the head region. Essential for efficient processing of 16S rRNA. May be needed both before and after RbfA during the maturation of 16S rRNA. It has affinity for free ribosomal 30S subunits but not for 70S ribosomes. The polypeptide is Ribosome maturation factor RimM (Francisella tularensis subsp. holarctica (strain FTNF002-00 / FTA)).